The chain runs to 840 residues: Heat shock 70 kDa protein 4 (840 aa).

K53 bears the N6-acetyllysine mark. At S76 the chain carries Phosphoserine. Residues Y89 and Y336 each carry the phosphotyrosine modification. 2 positions are modified to phosphoserine: S393 and S415. Position 430 is an N6-acetyllysine (K430). Residues 500 to 575 are disordered; it reads VHKSEENEEP…QAKKAKVKTS (76 aa). Positions 514-533 are enriched in basic and acidic residues; sequence QNAKEEEKMQVDQEEPHVEE. T538 is modified (phosphothreonine). Residues S546 and S647 each carry the phosphoserine modification. Y660 bears the Phosphotyrosine mark. K679 is modified (N6-acetyllysine). S756 carries the post-translational modification Phosphoserine. Position 773 is an N6-methyllysine (K773). A disordered region spans residues 783 to 840; that stretch reads ISKPKPKVEPPKEEQKNAEQNGPVDGQGDNPGPQAAEQGTDAAVPSDSDKKLPEMDID. 2 stretches are compositionally biased toward basic and acidic residues: residues 788–799 and 829–840; these read PKVEPPKEEQKN and DSDKKLPEMDID.

This sequence belongs to the heat shock protein 70 family. Interacts with TJP1/ZO-1.

Its subcellular location is the cytoplasm. In Pongo abelii (Sumatran orangutan), this protein is Heat shock 70 kDa protein 4 (HSPA4).